Reading from the N-terminus, the 177-residue chain is Large ribosomal subunit protein uL6 (177 aa).

Belongs to the universal ribosomal protein uL6 family. In terms of assembly, part of the 50S ribosomal subunit.

Functionally, this protein binds to the 23S rRNA, and is important in its secondary structure. It is located near the subunit interface in the base of the L7/L12 stalk, and near the tRNA binding site of the peptidyltransferase center. This is Large ribosomal subunit protein uL6 from Sphingopyxis alaskensis (strain DSM 13593 / LMG 18877 / RB2256) (Sphingomonas alaskensis).